A 155-amino-acid polypeptide reads, in one-letter code: Ribosomal RNA large subunit methyltransferase H (155 aa).

S-adenosyl-L-methionine-binding positions include Leu72, Gly103, and 122–127; that span reads LSALTL.

Belongs to the RNA methyltransferase RlmH family. Homodimer.

It localises to the cytoplasm. It catalyses the reaction pseudouridine(1915) in 23S rRNA + S-adenosyl-L-methionine = N(3)-methylpseudouridine(1915) in 23S rRNA + S-adenosyl-L-homocysteine + H(+). Functionally, specifically methylates the pseudouridine at position 1915 (m3Psi1915) in 23S rRNA. The chain is Ribosomal RNA large subunit methyltransferase H from Cronobacter sakazakii (strain ATCC BAA-894) (Enterobacter sakazakii).